Reading from the N-terminus, the 33-residue chain is Beta/kappa-theraphotoxin-Hlv1a (33 aa).

Cystine bridges form between C2/C17, C9/C22, and C16/C29. I33 is modified (isoleucine amide).

The protein belongs to the neurotoxin 10 (Hwtx-1) family. 11 (haplotoxin-2) subfamily. Expressed by the venom gland.

The protein localises to the secreted. Its function is as follows. Spider venom neurotoxin that blocks voltage-gated sodium channel Nav1.3/SCN3A in human (IC(50)=80 nM) and rat (IC(50)=160 nM). Partially inhibits human Kv11.1/KCNH2/ERG (25% at 175 uM). The chain is Beta/kappa-theraphotoxin-Hlv1a from Cyriopagopus lividus (Cobalt blue tarantula).